A 545-amino-acid chain; its full sequence is Chaperonin GroEL (545 aa).

Residues 31 to 34 (TLGP), 88 to 92 (DGTTT), G415, 478 to 480 (NAA), and D494 each bind ATP.

Belongs to the chaperonin (HSP60) family. As to quaternary structure, forms a cylinder of 14 subunits composed of two heptameric rings stacked back-to-back. Interacts with the co-chaperonin GroES.

The protein localises to the cytoplasm. The enzyme catalyses ATP + H2O + a folded polypeptide = ADP + phosphate + an unfolded polypeptide.. In terms of biological role, together with its co-chaperonin GroES, plays an essential role in assisting protein folding. The GroEL-GroES system forms a nano-cage that allows encapsulation of the non-native substrate proteins and provides a physical environment optimized to promote and accelerate protein folding. This Streptococcus pyogenes serotype M4 (strain MGAS10750) protein is Chaperonin GroEL.